Consider the following 225-residue polypeptide: GTP cyclohydrolase III (225 aa).

This sequence belongs to the archaeal-type GTP cyclohydrolase family.

It catalyses the reaction GTP + 3 H2O = 2-amino-5-formylamino-6-(5-phospho-D-ribosylamino)pyrimidin-4(3H)-one + 2 phosphate + 2 H(+). Its function is as follows. Catalyzes the formation of 2-amino-5-formylamino-6-ribofuranosylamino-4(3H)-pyrimidinone ribonucleotide monophosphate and inorganic phosphate from GTP. Also has an independent pyrophosphate phosphohydrolase activity. This Sulfurisphaera tokodaii (strain DSM 16993 / JCM 10545 / NBRC 100140 / 7) (Sulfolobus tokodaii) protein is GTP cyclohydrolase III.